A 341-amino-acid chain; its full sequence is 33 kDa chaperonin (341 aa).

Cystine bridges form between cysteine 245-cysteine 247 and cysteine 278-cysteine 281.

It belongs to the HSP33 family. Under oxidizing conditions two disulfide bonds are formed involving the reactive cysteines. Under reducing conditions zinc is bound to the reactive cysteines and the protein is inactive.

It is found in the cytoplasm. Its function is as follows. Redox regulated molecular chaperone. Protects both thermally unfolding and oxidatively damaged proteins from irreversible aggregation. Plays an important role in the bacterial defense system toward oxidative stress. The protein is 33 kDa chaperonin of Thermus thermophilus (strain ATCC 27634 / DSM 579 / HB8).